Consider the following 367-residue polypeptide: tRNA-specific 2-thiouridylase MnmA (367 aa).

ATP is bound by residues 12–19 (GMSGGVDS) and Met-38. Residues 98 to 100 (NPD) are interaction with target base in tRNA. The Nucleophile role is filled by Cys-103. A disulfide bridge links Cys-103 with Cys-200. Gly-128 provides a ligand contact to ATP. An interaction with tRNA region spans residues 150–152 (KDQ). Cys-200 serves as the catalytic Cysteine persulfide intermediate. Positions 312 to 313 (RY) are interaction with tRNA.

The protein belongs to the MnmA/TRMU family.

The protein resides in the cytoplasm. The catalysed reaction is S-sulfanyl-L-cysteinyl-[protein] + uridine(34) in tRNA + AH2 + ATP = 2-thiouridine(34) in tRNA + L-cysteinyl-[protein] + A + AMP + diphosphate + H(+). Catalyzes the 2-thiolation of uridine at the wobble position (U34) of tRNA, leading to the formation of s(2)U34. This is tRNA-specific 2-thiouridylase MnmA from Psychromonas ingrahamii (strain DSM 17664 / CCUG 51855 / 37).